Reading from the N-terminus, the 1240-residue chain is Structural polyprotein (1240 aa).

The interval 1 to 35 (MFPYPTLNYPPMAPINPMAYRDPNPPRQVAPFRPP) is necessary for nucleocapsid assembly and virus assembly. The interval 1–102 (MFPYPTLNYP…RKPKPGKRQR (102 aa)) is disordered. A compositionally biased stretch (pro residues) spans 23-34 (PNPPRQVAPFRP). Residues 36–69 (LAAQIEDLRRSIANLTLKQRAPNPPAGPPAKRKK) are host transcription inhibition. Residues 43–50 (LRRSIANL) carry the Supraphysiological nuclear export signal motif. N49 carries N-linked (GlcNAc...) asparagine; by host glycosylation. Over residues 65 to 102 (AKRKKPAPKPKPAQAKKKRPPPPAKKQKRKPKPGKRQR) the composition is skewed to basic residues. Residues 66–70 (KRKKP) carry the Nuclear localization signal motif. The binding to the viral RNA stretch occupies residues 82–112 (KRPPPPAKKQKRKPKPGKRQRMCMKLESDKT). The segment at 97–111 (PGKRQRMCMKLESDK) is ribosome-binding. At S109 the chain carries Phosphoserine. A Peptidase S3 domain is found at 111-260 (KTFPIMLNGQ…KDTPEGSEPW (150 aa)). The residue at position 112 (T112) is a Phosphothreonine. Active-site charge relay system residues include H137, D159, and S211. Residues 261–272 (SLATVMCVLANI) are functions as an uncleaved signal peptide for the precursor of protein E3/E2. Residues 261-682 (SLATVMCVLA…HEVVVYYYNR (422 aa)) lie on the Extracellular side of the membrane. 2 N-linked (GlcNAc...) asparagine; by host glycosylation sites follow: N271 and N638. The helical transmembrane segment at 683–703 (YPLTTIIGLCTCVAIIMVSCV) threads the bilayer. Residues 704 to 743 (HPCGSFAGLRNLCITPYKLAPNAQVPILLALLCCIKPTRA) are Cytoplasmic-facing. S-palmitoyl cysteine; by host attachment occurs at residues C706, C716, C736, and C737. The segment at 715–735 (LCITPYKLAPNAQVPILLALL) is transient transmembrane before p62-6K protein processing. Residues 744-758 (DDTLQVLNYLWNNNQ) are Extracellular-facing. The chain crosses the membrane as a helical span at residues 759-779 (NFFWMQTLIPLAALIVCMRIV). A topological domain (cytoplasmic) is located at residue R780. The helical transmembrane segment at 781-801 (CLFCCGPAFLLVCGAWAAAYE) threads the bilayer. The Extracellular segment spans residues 802–1216 (HTAVMPNKVG…WSWLKVLVGG (415 aa)). N834 is a glycosylation site (N-linked (GlcNAc...) asparagine; by host). 4 disulfide bridges follow: C848-C913, C861-C893, C862-C895, and C867-C877. The segment at 883–900 (VYPFMWGGAYCFCDTENT) is E1 fusion peptide loop. N933 carries N-linked (GlcNAc...) asparagine; by host glycosylation. Cystine bridges form between C1059/C1071, C1101/C1176, and C1106/C1180. The helical transmembrane segment at 1217-1237 (TSAFIVLGLIATAVVALVLFF) threads the bilayer. Over 1238-1240 (HRH) the chain is Cytoplasmic.

In terms of assembly, part of a tetrameric complex composed of host CRM1, host importin alpha/beta dimer and the viral capsid; this complex blocks the receptor-mediated transport through the nuclear pore. Interacts with host phosphatase PPP1CA; this interaction dephosphorylates the capsid protein, which increases its ability to bind to the viral genome. Interacts with host karyopherin KPNA4; this interaction allows the nuclear import of the viral capsid protein. Interacts with spike glycoprotein E2. Interacts with host IRAK1; the interaction leads to inhibition of IRAK1-dependent signaling. As to quaternary structure, the precursor of protein E3/E2 and E1 form a heterodimer shortly after synthesis. The precursor of protein E3/E2 and E1 form a heterodimer shortly after synthesis. Processing of the precursor of protein E3/E2 into E2 and E3 results in a heterodimer of the spike glycoproteins E2 and E1. Spike at virion surface are constituted of three E2-E1 heterodimers. After target cell attachment and endocytosis, E1 change conformation to form homotrimers. Interacts with 6K protein. In terms of assembly, processing of the precursor of protein E3/E2 into E2 and E3 results in a heterodimer of the spike glycoproteins E2 and E1. Spike at virion surface are constituted of three E2-E1 heterodimers. Interacts with 6K protein. As to quaternary structure, interacts with spike glycoprotein E1. Interacts with spike glycoprotein E2. In terms of processing, structural polyprotein: Specific enzymatic cleavages in vivo yield mature proteins. Capsid protein is auto-cleaved during polyprotein translation, unmasking a signal peptide at the N-terminus of the precursor of E3/E2. The remaining polyprotein is then targeted to the host endoplasmic reticulum, where host signal peptidase cleaves it into pE2, 6K and E1 proteins. pE2 is further processed to mature E3 and E2 by host furin in trans-Golgi vesicle. Post-translationally, phosphorylated on serine and threonine residues. Palmitoylated via thioester bonds. These palmitoylations may induce disruption of the C-terminus transmembrane. This would result in the reorientation of E2 C-terminus from lumenal to cytoplasmic side. In terms of processing, N-glycosylated. Post-translationally, palmitoylated via thioester bonds.

It localises to the virion. It is found in the host cytoplasm. The protein localises to the host cell membrane. The protein resides in the host nucleus. Its subcellular location is the virion membrane. It carries out the reaction Autocatalytic release of the core protein from the N-terminus of the togavirus structural polyprotein by hydrolysis of a -Trp-|-Ser- bond.. In terms of biological role, forms an icosahedral capsid with a T=4 symmetry composed of 240 copies of the capsid protein surrounded by a lipid membrane through which penetrate 80 spikes composed of trimers of E1-E2 heterodimers. The capsid protein binds to the viral RNA genome at a site adjacent to a ribosome binding site for viral genome translation following genome release. Possesses a protease activity that results in its autocatalytic cleavage from the nascent structural protein. Following its self-cleavage, the capsid protein transiently associates with ribosomes, and within several minutes the protein binds to viral RNA and rapidly assembles into icosahedric core particles. The resulting nucleocapsid eventually associates with the cytoplasmic domain of the spike glycoprotein E2 at the cell membrane, leading to budding and formation of mature virions. In case of infection, new virions attach to target cells and after clathrin-mediated endocytosis their membrane fuses with the host endosomal membrane. This leads to the release of the nucleocapsid into the cytoplasm, followed by an uncoating event necessary for the genomic RNA to become accessible. The uncoating might be triggered by the interaction of capsid proteins with ribosomes. Binding of ribosomes would release the genomic RNA since the same region is genomic RNA-binding and ribosome-binding. Specifically inhibits interleukin-1 receptor-associated kinase 1/IRAK1-dependent signaling during viral entry, representing a means by which the alphaviruses may evade innate immune detection and activation prior to viral gene expression. Inhibits host transcription. Forms a tetrameric complex with XPO1/CRM1 and the nuclear import receptor importin. This complex blocks the central channel of host nuclear pores thereby inhibiting the receptor-mediated nuclear transport and thus the host mRNA and rRNA transcription. The inhibition of transcription is linked to a cytopathic effect on the host cell. Functionally, provides the signal sequence for the translocation of the precursor of protein E3/E2 to the host endoplasmic reticulum. Furin-cleaved E3 remains associated with spike glycoprotein E1 and mediates pH protection of the latter during the transport via the secretory pathway. After virion release from the host cell, the assembly protein E3 is gradually released in the extracellular space. Its function is as follows. Plays a role in viral attachment to target host cell, by binding to the cell receptor. Synthesized as a p62 precursor which is processed by furin at the cell membrane just before virion budding, giving rise to E2-E1 heterodimer. The p62-E1 heterodimer is stable, whereas E2-E1 is unstable and dissociate at low pH. p62 is processed at the last step, presumably to avoid E1 fusion activation before its final export to cell surface. E2 C-terminus contains a transitory transmembrane that would be disrupted by palmitoylation, resulting in reorientation of the C-terminal tail from lumenal to cytoplasmic side. This step is critical since E2 C-terminus is involved in budding by interacting with capsid proteins. This release of E2 C-terminus in cytoplasm occurs lately in protein export, and precludes premature assembly of particles at the endoplasmic reticulum membrane. Constitutive membrane protein involved in virus glycoprotein processing, cell permeabilization, and the budding of viral particles. Disrupts the calcium homeostasis of the cell, probably at the endoplasmic reticulum level. This leads to cytoplasmic calcium elevation. Because of its lipophilic properties, the 6K protein is postulated to influence the selection of lipids that interact with the transmembrane domains of the glycoproteins, which, in turn, affects the deformability of the bilayer required for the extreme curvature that occurs as budding proceeds. Present in low amount in virions, about 3% compared to viral glycoproteins. In terms of biological role, class II viral fusion protein. Fusion activity is inactive as long as E1 is bound to E2 in mature virion. After virus attachment to target cell and endocytosis, acidification of the endosome would induce dissociation of E1/E2 heterodimer and concomitant trimerization of the E1 subunits. This E1 trimer is fusion active, and promotes release of viral nucleocapsid in cytoplasm after endosome and viral membrane fusion. Efficient fusion requires the presence of cholesterol and sphingolipid in the target membrane. Fusion is optimal at levels of about 1 molecule of cholesterol per 2 molecules of phospholipids, and is specific for sterols containing a 3-beta-hydroxyl group. The polypeptide is Structural polyprotein (Eastern equine encephalitis virus (strain va33[ten broeck]) (EEEV)).